Here is a 539-residue protein sequence, read N- to C-terminus: Glycerophosphoinositol inositolphosphodiesterase GDPD2 (539 aa).

Residues 1 to 38 lie on the Cytoplasmic side of the membrane; that stretch reads MAESPGCCSVWARCLHCLYSCHWRKCPRERMQTSKCDC. The chain crosses the membrane as a helical span at residues 39-59; the sequence is IWFGLLFLTFLLSLSWLYIGL. Topologically, residues 60 to 85 are extracellular; that stretch reads VLLNDLHNFNEFLFRRWGHWMDWSLA. Residues 86–106 traverse the membrane as a helical segment; the sequence is FLLVISLLVTYASLLLVLALL. The Cytoplasmic portion of the chain corresponds to 107–121; the sequence is LRLCRQPLHLHSLHK. Residues 122 to 142 form a helical membrane-spanning segment; that stretch reads VLLLLIMLLVAAGLVGLDIQW. The Extracellular segment spans residues 143–154; the sequence is QQEWHSLRVSLQ. The helical transmembrane segment at 155–175 threads the bilayer; that stretch reads ATAPFLHIGAAAGIALLAWPV. At 176 to 188 the chain is on the cytoplasmic side; sequence ADTFYRIHRRGPK. Residues 189-209 form a helical membrane-spanning segment; it reads ILLLLLFFGVVLVIYLAPLCI. At 210–490 the chain is on the extracellular side; sequence SSPCIMEPRD…PIWLITPQTY (281 aa). The GP-PDE domain occupies 224–479; the sequence is PGLVGHRGAP…NDCQLLQQMR (256 aa). Positions 256, 258, and 271 each coordinate a divalent metal cation. Asn442 carries N-linked (GlcNAc...) asparagine glycosylation. Residues 491–511 form a helical membrane-spanning segment; the sequence is LIIWVITNCVSTMLLLWTFLL. Residues 512–539 are Cytoplasmic-facing; the sequence is QRRFVKKRGKTGLETAVLLTRINNFMME.

This sequence belongs to the glycerophosphoryl diester phosphodiesterase family. Requires Ca(2+) as cofactor.

It localises to the cell membrane. The protein localises to the cytoplasm. The protein resides in the cytoskeleton. It carries out the reaction sn-glycero-3-phospho-1D-myo-inositol + H2O = 1D-myo-inositol 1-phosphate + glycerol + H(+). In terms of biological role, has glycerophosphoinositol inositolphosphodiesterase activity and specifically hydrolyzes glycerophosphoinositol, with no activity for other substrates such as glycerophosphoinositol 4-phosphate, glycerophosphocholine, glycerophosphoethanolamine, and glycerophosphoserine. Accelerates the program of osteoblast differentiation and growth. May play a role in remodeling of the actin cytoskeleton. In Homo sapiens (Human), this protein is Glycerophosphoinositol inositolphosphodiesterase GDPD2 (GDPD2).